The sequence spans 1050 residues: ATP-dependent DNA helicase MPH1 (1050 aa).

One can recognise a Helicase ATP-binding domain in the interval 95–262 (IVQRAFYHNL…EIIDNLNISK (168 aa)). 108 to 115 (LPTGLGKT) serves as a coordination point for ATP. Positions 210–213 (DEAH) match the DEAH box motif. The Helicase C-terminal domain occupies 431–631 (KIEAMMEELD…LIDLKEQNRM (201 aa)). 2 disordered regions span residues 493–524 (DESN…AQIN) and 743–821 (DSDE…PPKR). Basic residues predominate over residues 499–508 (KKSKGKRVGK). Residues 786 to 799 (RTLDQHHSASEERG) are compositionally biased toward basic and acidic residues. Polar residues predominate over residues 800 to 810 (INSNFSHESNL).

Belongs to the DEAD box helicase family. DEAH subfamily. FANCM sub-subfamily. As to quaternary structure, interacts with the MHF histone-fold complex to form the FANCM-MHF complex.

The protein resides in the nucleus. It catalyses the reaction ATP + H2O = ADP + phosphate + H(+). Functionally, ATP-dependent DNA helicase involved in DNA damage repair by homologous recombination and in genome maintenance. Capable of unwinding D-loops. Plays a role in limiting crossover recombinants during mitotic DNA double-strand break (DSB) repair. Component of a FANCM-MHF complex which promotes gene conversion at blocked replication forks, probably by reversal of the stalled fork. The polypeptide is ATP-dependent DNA helicase MPH1 (Scheffersomyces stipitis (strain ATCC 58785 / CBS 6054 / NBRC 10063 / NRRL Y-11545) (Yeast)).